Here is a 366-residue protein sequence, read N- to C-terminus: 2-oxoglutarate synthase subunit KorA (366 aa).

Heterotetramer of the KorA, KorB, KorC and KorD subunits.

It carries out the reaction 2 oxidized [2Fe-2S]-[ferredoxin] + 2-oxoglutarate + CoA = succinyl-CoA + 2 reduced [2Fe-2S]-[ferredoxin] + CO2 + H(+). This chain is 2-oxoglutarate synthase subunit KorA (korA), found in Methanocaldococcus jannaschii (strain ATCC 43067 / DSM 2661 / JAL-1 / JCM 10045 / NBRC 100440) (Methanococcus jannaschii).